The chain runs to 294 residues: 33 kDa chaperonin (294 aa).

Disulfide bonds link Cys-236–Cys-238 and Cys-269–Cys-272.

This sequence belongs to the HSP33 family. In terms of processing, under oxidizing conditions two disulfide bonds are formed involving the reactive cysteines. Under reducing conditions zinc is bound to the reactive cysteines and the protein is inactive.

The protein localises to the cytoplasm. Functionally, redox regulated molecular chaperone. Protects both thermally unfolding and oxidatively damaged proteins from irreversible aggregation. Plays an important role in the bacterial defense system toward oxidative stress. The sequence is that of 33 kDa chaperonin from Desulfotalea psychrophila (strain LSv54 / DSM 12343).